The sequence spans 234 residues: NLP effector protein Pc576423 (234 aa).

The signal sequence occupies residues 1–18 (MNLRAIAVTFATFAGANA). Residues Asn35 and Asn66 are each glycosylated (N-linked (GlcNAc...) asparagine). A Hepta-peptide GHRHDWE motif motif is present at residues 119–125 (GHRHDWE).

The protein belongs to the Necrosis inducing protein (NPP1) family.

The protein resides in the secreted. Secreted effector that contributes strongly to virulence during infection by P.capsici. In Phytophthora capsici, this protein is NLP effector protein Pc576423.